Reading from the N-terminus, the 184-residue chain is UPF0316 protein YebE (184 aa).

Transmembrane regions (helical) follow at residues 9–29, 41–61, and 67–87; these read GIAM…FFTI, LAAG…SLVL, and IQNV…GMKI.

Belongs to the UPF0316 family.

It is found in the cell membrane. The polypeptide is UPF0316 protein YebE (yebE) (Bacillus subtilis (strain 168)).